The chain runs to 1483 residues: Ubiquitin fusion degradation protein 4 (1483 aa).

The segment at 1 to 117 (MSENNSHNLD…NNEFGSNPLH (117 aa)) is disordered. Residues 8–18 (NLDEHESHSEN) are compositionally biased toward basic and acidic residues. Residues 61–70 (EADDGEDDDN) are compositionally biased toward acidic residues. Phosphothreonine is present on Thr87. Lys349 is covalently cross-linked (Glycyl lysine isopeptide (Lys-Gly) (interchain with G-Cter in ubiquitin)). Positions 1007–1081 (CGVKSDSFIN…LIQLWKNKSK (75 aa)) are K-box. Positions 1376–1483 (AEHGYTMDSS…EEGAGAFLLS (108 aa)) constitute an HECT domain. Cys1450 acts as the Glycyl thioester intermediate in catalysis.

This sequence belongs to the UPL family. K-HECT subfamily.

The enzyme catalyses S-ubiquitinyl-[E2 ubiquitin-conjugating enzyme]-L-cysteine + [acceptor protein]-L-lysine = [E2 ubiquitin-conjugating enzyme]-L-cysteine + N(6)-ubiquitinyl-[acceptor protein]-L-lysine.. Its function is as follows. E3 ubiquitin-protein ligase which accepts ubiquitin from an E2 ubiquitin-conjugating enzyme in the form of a thioester and then directly transfers the ubiquitin to targeted substrates. The polypeptide is Ubiquitin fusion degradation protein 4 (UFD4) (Saccharomyces cerevisiae (strain ATCC 204508 / S288c) (Baker's yeast)).